Consider the following 2715-residue polypeptide: G surface protein, allelic form 156 (2715 aa).

A signal peptide spans 1–20 (MNNKFIIFSLLLALVASQTY). PSA repeat units lie at residues 111–171 (KTLD…NTCD), 177–237 (FATD…RICD), 243–303 (LTTD…KACA), 309–366 (IATN…KTCA), 372–404 (NNTHDLCTSYLSTCTVKSGGGCQNRTCANAPTT), 405–467 (MTTN…KTCV), 473–530 (NTTH…KQCV), 536–596 (TTTH…KACS), 602–673 (FTTT…KSCA), 688–748 (GFTF…KTCA), 752–812 (QTTH…ATCA), 820–895 (YDSD…GACT), 934–1001 (GLTF…AECA), 1008–1067 (GLDH…SNCA), 1073–1141 (GLTT…THCP), 1147–1215 (GLTD…TECA), 1221–1289 (GLTD…TECA), 1295–1363 (GLTN…TECA), 1369–1437 (GLTN…TECA), 1443–1507 (GLTK…LNCS), 1513–1578 (GFVH…TDCA), 1586–1652 (TITF…ATCD), 1693–1751 (TFNH…KTCD), 1759–1819 (RDDD…LNCG), 1827–1898 (YDTH…KSCT), 1904–1976 (TTTH…KSCA), 1984–2044 (YDDD…KSCD), 2080–2149 (FATD…KNCS), 2155–2215 (LTSE…KDCQ), 2219–2286 (GTTH…TSCK), 2290–2355 (WNND…TSCA), 2359–2430 (YTTH…QSCA), 2434–2500 (GTTH…LTCA), and 2505–2573 (GTAT…TACT).

The protein localises to the cell membrane. Functionally, this protein is the surface antigen or immobilization antigen of Paramecium primaurelia. This is G surface protein, allelic form 156 (156G) from Paramecium primaurelia.